Here is a 217-residue protein sequence, read N- to C-terminus: D-methionine transport system permease protein MetI (217 aa).

The 192-residue stretch at 13–204 (VWETLMMTFV…LLVILVYLIQ (192 aa)) folds into the ABC transmembrane type-1 domain. The next 5 membrane-spanning stretches (helical) occupy residues 20-40 (TFVS…LLYV), 58-78 (GVVN…MIPF), 81-101 (MIVG…VGAA), 152-172 (ITLI…AGGL), and 186-206 (ATVM…IQLS).

Belongs to the binding-protein-dependent transport system permease family. CysTW subfamily.

It localises to the cell inner membrane. Its function is as follows. Part of the binding-protein-dependent transport system for D-methionine and the toxic methionine analog alpha-methyl-methionine. Probably responsible for the translocation of the substrate across the membrane. This Yersinia pestis protein is D-methionine transport system permease protein MetI (metI).